Here is a 234-residue protein sequence, read N- to C-terminus: Putative methyltransferase-like protein 15P1 (234 aa).

S-adenosyl-L-methionine-binding positions include 100–102 (GGH), Asp119, Phe146, Asp169, and Gln176.

The protein belongs to the methyltransferase superfamily. RsmH family.

In terms of biological role, probable S-adenosyl-L-methionine-dependent methyltransferase. In Homo sapiens (Human), this protein is Putative methyltransferase-like protein 15P1 (METTL15P1).